The sequence spans 448 residues: tRNA modification GTPase MnmE (448 aa).

3 residues coordinate (6S)-5-formyl-5,6,7,8-tetrahydrofolate: arginine 21, glutamate 80, and lysine 119. In terms of domain architecture, TrmE-type G spans 215-370 (GVKLAIVGRP…LSEEILKKVG (156 aa)). K(+) is bound at residue asparagine 225. Residues 225–230 (NVGKSS), 244–250 (TDIAGTT), and 269–272 (DTAG) contribute to the GTP site. Serine 229 provides a ligand contact to Mg(2+). Positions 244, 246, and 249 each coordinate K(+). Threonine 250 lines the Mg(2+) pocket. Lysine 448 contributes to the (6S)-5-formyl-5,6,7,8-tetrahydrofolate binding site.

The protein belongs to the TRAFAC class TrmE-Era-EngA-EngB-Septin-like GTPase superfamily. TrmE GTPase family. Homodimer. Heterotetramer of two MnmE and two MnmG subunits. The cofactor is K(+).

It localises to the cytoplasm. Its function is as follows. Exhibits a very high intrinsic GTPase hydrolysis rate. Involved in the addition of a carboxymethylaminomethyl (cmnm) group at the wobble position (U34) of certain tRNAs, forming tRNA-cmnm(5)s(2)U34. The chain is tRNA modification GTPase MnmE from Aquifex aeolicus (strain VF5).